Reading from the N-terminus, the 629-residue chain is tRNA uridine 5-carboxymethylaminomethyl modification enzyme MnmG (629 aa).

FAD contacts are provided by residues 13–18 (GGGHAG), valine 125, and serine 180. 273-287 (GPRYCPSIEDKVMRF) contacts NAD(+). Glutamine 370 lines the FAD pocket.

It belongs to the MnmG family. Homodimer. Heterotetramer of two MnmE and two MnmG subunits. FAD serves as cofactor.

It localises to the cytoplasm. Functionally, NAD-binding protein involved in the addition of a carboxymethylaminomethyl (cmnm) group at the wobble position (U34) of certain tRNAs, forming tRNA-cmnm(5)s(2)U34. The polypeptide is tRNA uridine 5-carboxymethylaminomethyl modification enzyme MnmG (Salmonella paratyphi C (strain RKS4594)).